The chain runs to 448 residues: Exodeoxyribonuclease 7 large subunit (448 aa).

The protein belongs to the XseA family. Heterooligomer composed of large and small subunits.

It localises to the cytoplasm. The enzyme catalyses Exonucleolytic cleavage in either 5'- to 3'- or 3'- to 5'-direction to yield nucleoside 5'-phosphates.. Its function is as follows. Bidirectionally degrades single-stranded DNA into large acid-insoluble oligonucleotides, which are then degraded further into small acid-soluble oligonucleotides. In Bacillus pumilus (strain SAFR-032), this protein is Exodeoxyribonuclease 7 large subunit.